The primary structure comprises 320 residues: MKLNLRFPSYFLPVVAASAFLVSCATPNTYEVQRAALIQLVEEDERQNYIQKGSMGANAVMTAAKAETKTAEKTATSTKAASIELKKTDTDIKTTTTTENKSASGYKLDTLFGDYILWVVDHLSGLLFSPKTNNSTTTQKIQLITEDKMILDGGNLTVEKNHEHGHTHKNGETHEHDHDHHEGEEEVIVGRALSFANGLFLVVDLKEEKHEEKKEAKSEMSMNSKDMVMMTKTEMMSKEMKSEQKMEKKEEHEHPHKKLSLSTTAYKFGQSFNILEFTGAMHHKTAHNNETEFKNLGKKYGGMTEYTIVDFDFNPPKPTK.

Positions 1–23 (MKLNLRFPSYFLPVVAASAFLVS) are cleaved as a signal peptide. C24 is lipidated: N-palmitoyl cysteine. The S-diacylglycerol cysteine moiety is linked to residue C24. The disordered stretch occupies residues 160-181 (KNHEHGHTHKNGETHEHDHDHH).

The protein localises to the cell membrane. This is an uncharacterized protein from Mycoplasma pneumoniae (strain ATCC 29342 / M129 / Subtype 1) (Mycoplasmoides pneumoniae).